Reading from the N-terminus, the 371-residue chain is Interstrand DNA cross-link repair glycosylase (371 aa).

Residues 37-39 (QAQ) carry the QXQ; important for activity motif.

The protein belongs to the DNA glycosylase AlkZ-like family.

DNA glycosylase involved in the repair of interstrand DNA cross-links (ICLs), which are highly toxic DNA lesions that covalently tether the opposing strands of DNA, thereby inhibiting essential cellular processes such as DNA replication and transcription. Acts by unhooking both sides of the ICLs, forming abasic (AP) sites on both strands. AlkZ specifically repairs DNA damage induced by azinomycin B (AZB), a natural product with potent antibiotic and antitumor activities that interacts covalently with duplex DNA and forms ICLs. AlkZ thus confers self-resistance to azinomycin B, which is produced by S.sahachiroi. It may also protect target sites by protein-DNA interaction. Binds sequence non-specifically to native DNA and structure-specifically to azinomycin B-modified sites, with higher affinity to azinomycin B-modified sites and lower affinity to native DNA duplex. In vitro, also acts on monoadducts and can catalyze the excision of N7-methylguanine (7mGua) from an oligonucleotide containing N7-methyldeoxyguanosine (d7mG). Is a monofunctional DNA glycosylase that does not have lyase activity. This chain is Interstrand DNA cross-link repair glycosylase, found in Streptomyces sahachiroi.